We begin with the raw amino-acid sequence, 249 residues long: 5'-nucleotidase SurE (249 aa).

A divalent metal cation contacts are provided by Asp9, Asp10, Ser40, and Asn92.

The protein belongs to the SurE nucleotidase family. Requires a divalent metal cation as cofactor.

The protein localises to the cytoplasm. It carries out the reaction a ribonucleoside 5'-phosphate + H2O = a ribonucleoside + phosphate. In terms of biological role, nucleotidase that shows phosphatase activity on nucleoside 5'-monophosphates. The chain is 5'-nucleotidase SurE from Shewanella loihica (strain ATCC BAA-1088 / PV-4).